The sequence spans 1060 residues: Carbamoyl phosphate synthase large chain (1060 aa).

The interval 1–401 (MPKRQDIHKI…SLLKAVRSLE (401 aa)) is carboxyphosphate synthetic domain. Residues arginine 129, arginine 169, glycine 175, glycine 176, arginine 208, isoleucine 210, glutamate 215, glycine 241, valine 242, histidine 243, glutamine 284, and glutamate 298 each contribute to the ATP site. Positions 133 to 327 (KNLMQKLHEP…IAKMAAKIAV (195 aa)) constitute an ATP-grasp 1 domain. Glutamine 284, glutamate 298, and asparagine 300 together coordinate Mg(2+). Mn(2+)-binding residues include glutamine 284, glutamate 298, and asparagine 300. The interval 402–546 (VGLIHPERPA…YSTYESSTES (145 aa)) is oligomerization domain. Residues 547 to 929 (VKSDKPSVLV…ALYKAFEAAG (383 aa)) form a carbamoyl phosphate synthetic domain region. In terms of domain architecture, ATP-grasp 2 spans 671 to 861 (DQVIKSLKLP…LAQVATLAIL (191 aa)). ATP is bound by residues arginine 707, histidine 746, leucine 748, glutamate 752, glycine 777, isoleucine 778, histidine 779, serine 780, glutamine 820, and glutamate 832. Mg(2+) is bound by residues glutamine 820, glutamate 832, and asparagine 834. 3 residues coordinate Mn(2+): glutamine 820, glutamate 832, and asparagine 834. Residues 930–1060 (MHLPQFGRAL…QAFSISPIKS (131 aa)) form the MGS-like domain. The allosteric domain stretch occupies residues 930–1060 (MHLPQFGRAL…QAFSISPIKS (131 aa)).

Belongs to the CarB family. In terms of assembly, composed of two chains; the small (or glutamine) chain promotes the hydrolysis of glutamine to ammonia, which is used by the large (or ammonia) chain to synthesize carbamoyl phosphate. Tetramer of heterodimers (alpha,beta)4. Mg(2+) is required as a cofactor. Mn(2+) serves as cofactor.

The catalysed reaction is hydrogencarbonate + L-glutamine + 2 ATP + H2O = carbamoyl phosphate + L-glutamate + 2 ADP + phosphate + 2 H(+). It carries out the reaction hydrogencarbonate + NH4(+) + 2 ATP = carbamoyl phosphate + 2 ADP + phosphate + 2 H(+). It functions in the pathway amino-acid biosynthesis; L-arginine biosynthesis; carbamoyl phosphate from bicarbonate: step 1/1. Its pathway is pyrimidine metabolism; UMP biosynthesis via de novo pathway; (S)-dihydroorotate from bicarbonate: step 1/3. Its function is as follows. Large subunit of the glutamine-dependent carbamoyl phosphate synthetase (CPSase). CPSase catalyzes the formation of carbamoyl phosphate from the ammonia moiety of glutamine, carbonate, and phosphate donated by ATP, constituting the first step of 2 biosynthetic pathways, one leading to arginine and/or urea and the other to pyrimidine nucleotides. The large subunit (synthetase) binds the substrates ammonia (free or transferred from glutamine from the small subunit), hydrogencarbonate and ATP and carries out an ATP-coupled ligase reaction, activating hydrogencarbonate by forming carboxy phosphate which reacts with ammonia to form carbamoyl phosphate. The chain is Carbamoyl phosphate synthase large chain from Lacticaseibacillus casei (strain BL23) (Lactobacillus casei).